The sequence spans 215 residues: uncharacterized protein (215 aa).

The protein resides in the mitochondrion. This is an uncharacterized protein from Arabidopsis thaliana (Mouse-ear cress).